Consider the following 1273-residue polypeptide: Clustered mitochondria protein homolog (1273 aa).

One can recognise a Clu domain in the interval 344-599; that stretch reads PANNADYSRM…NTYPLDVKFA (256 aa). TPR repeat units follow at residues 981–1013, 1022–1055, and 1151–1184; these read SDQK…KEEV, AEKY…YERV, and ATLE…FTRE. Disordered stretches follow at residues 1217–1242 and 1254–1273; these read AEQA…KAEL and IEGG…KGKK. The span at 1262 to 1273 shows a compositional bias: basic residues; it reads SKKKSSKKKGKK.

The protein belongs to the CLU family. May associate with the eukaryotic translation initiation factor 3 (eIF-3) complex.

Its subcellular location is the cytoplasm. Its function is as follows. mRNA-binding protein involved in proper cytoplasmic distribution of mitochondria. This chain is Clustered mitochondria protein homolog, found in Vanderwaltozyma polyspora (strain ATCC 22028 / DSM 70294 / BCRC 21397 / CBS 2163 / NBRC 10782 / NRRL Y-8283 / UCD 57-17) (Kluyveromyces polysporus).